The chain runs to 222 residues: 7-cyano-7-deazaguanine synthase (222 aa).

Residue 8 to 18 (LSGGLDSTTCL) participates in ATP binding. Residues cysteine 186, cysteine 194, cysteine 197, and cysteine 200 each contribute to the Zn(2+) site.

It belongs to the QueC family. As to quaternary structure, homodimer. The cofactor is Zn(2+).

It catalyses the reaction 7-carboxy-7-deazaguanine + NH4(+) + ATP = 7-cyano-7-deazaguanine + ADP + phosphate + H2O + H(+). It functions in the pathway purine metabolism; 7-cyano-7-deazaguanine biosynthesis. Functionally, catalyzes the ATP-dependent conversion of 7-carboxy-7-deazaguanine (CDG) to 7-cyano-7-deazaguanine (preQ(0)). In Acetivibrio thermocellus (strain ATCC 27405 / DSM 1237 / JCM 9322 / NBRC 103400 / NCIMB 10682 / NRRL B-4536 / VPI 7372) (Clostridium thermocellum), this protein is 7-cyano-7-deazaguanine synthase.